The sequence spans 661 residues: Vasorin (661 aa).

The first 19 residues, 1-19 (MWHLLVWIILLATAQQMIT), serve as a signal peptide directing secretion. In terms of domain architecture, LRRNT spans 20–50 (EGCPAGCQCNTPQTVFCLARKNSNFPRSVPP). At 20 to 563 (EGCPAGCQCN…VTQSQEGNLT (544 aa)) the chain is on the extracellular side. LRR repeat units lie at residues 52-72 (TLNLYVFENGISSIEESSFIG), 75-96 (GLHLLDLSHNQLSSLPGGVFRN), 99-120 (NLSNLDLTSNQLTEISADTFQG), 123-144 (RLERLYLNGNRIRSIHPEAFKG), 147-168 (SLLELKLSNNQLVTPPAFSLPH), 169-189 (LLLLDLSYNAIPVIQQGVFNA), 191-212 (NIESLRLAGLGLKEVPEELLSG), 215-237 (NLHELDLSDNQLDKVPPGLHGLT), 238-258 (KLNIAGNVGFSQIQVDDLSNL), and 259-281 (PALQELDLSGLSLQTLPKGLFRS). Residue Asn-99 is glycosylated (N-linked (GlcNAc...) asparagine). Residues 293–346 (NPFNCVCSLGWLSEWMRVSGVVLLRPDETRCHFPPKNAGKTLRQLRDSEYGCPA) form the LRRCT domain. Over residues 348–385 (TTIQMPSTMPPSTTTGPPTTTKHLQTEAPTTASTTTTT) the composition is skewed to low complexity. The disordered stretch occupies residues 348-395 (TTIQMPSTMPPSTTTGPPTTTKHLQTEAPTTASTTTTTIPHQEQEEDT). Residues 403 to 440 (EDTLCPPQTCLNGGSCHLDPTGQLECECPPGFQGTYCE) form the EGF-like domain. Intrachain disulfides connect Cys-407-Cys-418, Cys-412-Cys-428, and Cys-430-Cys-439. One can recognise a Fibronectin type-III domain in the interval 455–543 (EQVKIIEVTV…EEDLCTETHT (89 aa)). N-linked (GlcNAc...) asparagine glycans are attached at residues Asn-518 and Asn-561. Residues 564 to 584 (LVLVPAVAAGILLSAAVAAAA) traverse the membrane as a helical segment. Residues 585–661 (CYARRRKGKG…PTGRLPHSYF (77 aa)) are Cytoplasmic-facing. Residues 591 to 661 (KGKGHSVEDG…PTGRLPHSYF (71 aa)) form a disordered region. Over residues 606–623 (DGVKKGLDGKGEVKKLSE) the composition is skewed to basic and acidic residues.

The protein resides in the membrane. Functionally, may act as an inhibitor of TGF-beta signaling. The chain is Vasorin (vasn) from Xenopus tropicalis (Western clawed frog).